Reading from the N-terminus, the 842-residue chain is Ionotropic receptor 21a (842 aa).

An N-terminal signal peptide occupies residues 1 to 15 (MSYYWVALVLFTAQA). N325 carries an N-linked (GlcNAc...) asparagine glycan. The next 2 membrane-spanning stretches (helical) occupy residues 405 to 425 (WPVW…IVFT) and 437 to 457 (WGEV…AFSF). Residue N469 is glycosylated (N-linked (GlcNAc...) asparagine). Residues 479–499 (WLFTIIITSCYTGSIIAFVTL) traverse the membrane as a helical segment. 4 N-linked (GlcNAc...) asparagine glycosylation sites follow: N533, N558, N583, and N588. The chain crosses the membrane as a helical span at residues 680-700 (MFLLMALGYFLGATALVSEIV). The interval 722–745 (WSSASSGSMLRTNAEQLSHDKRKA) is disordered. N-linked (GlcNAc...) asparagine glycans are attached at residues N765 and N797.

This sequence belongs to the glutamate-gated ion channel (TC 1.A.10.1) family. In terms of tissue distribution, expressed in the dorsal organ cool cells. In the antenna, expressed in approximately six neurons in the arista as well as five to ten neurons near the third chamber of the sacculus.

It localises to the cell membrane. Its function is as follows. Integral part of a neural sensory system in the antenna that provides the neural basis for the response to environmental changes in temperature (thermosensation). Together with Ir25a and Ir93a, mediates the response of the dorsal organ cool cells, a trio of cool-responsive neurons, to cooling and is required for cool avoidance behavior. This Drosophila melanogaster (Fruit fly) protein is Ionotropic receptor 21a.